Consider the following 619-residue polypeptide: Sodium-coupled monocarboxylate transporter 2 (619 aa).

At 1 to 9 (MRVKNFEAW) the chain is on the extracellular side. A helical transmembrane segment spans residues 10–30 (DYVVFAGLFVISSGIGVFFAI). The Cytoplasmic segment spans residues 31-47 (KERKKTTSREFLVGGRQ). A helical membrane pass occupies residues 48–68 (MSFGPVALSLTASFMSAVTVL). Topologically, residues 69-80 (GTPAEVYRFGAS) are extracellular. Residues 81–101 (FFLFLISYVFVVFFTSELFLP) form a helical membrane-spanning segment. Over 102 to 128 (VFYRSGITSTYEYLQLRFNKPVRYAAT) the chain is Cytoplasmic. The chain crosses the membrane as a helical span at residues 129–149 (IIYIVQTILYTGVVVYAPALA). The Extracellular segment spans residues 150–157 (LNQVTGFN). Residues 158-178 (LWASVFATGIVCTFYCSLGGL) traverse the membrane as a helical segment. At 179 to 180 (KA) the chain is on the cytoplasmic side. A helical transmembrane segment spans residues 181-201 (VVWTDAFQMVVMIVGFLTVLI). Over 202–235 (QGSNHVGGFNNVLEKAGNGSRLHIVDFDVDPLRR) the chain is Extracellular. The N-linked (GlcNAc...) asparagine glycan is linked to N219. The helical transmembrane segment at 236-256 (HTFWTITIGGTFTWLGVYGVN) threads the bilayer. Over 257–275 (QSTIQRCISCKTEKHAKLA) the chain is Cytoplasmic. The chain crosses the membrane as a helical span at residues 276 to 296 (LYFNLLGLWIIVACAVFSGLI). The Extracellular portion of the chain corresponds to 297 to 321 (MYSHFKDCDPWTSGVISAPDQLMPY). Residues 322–342 (FVMEIFATMPGLPGLFVACAF) form a helical membrane-spanning segment. At 343 to 385 (SGTLSTVAASINALATVTFEDFVKSCFPHLSDKLSTWISKGLC) the chain is on the cytoplasmic side. A helical membrane pass occupies residues 386–406 (ILFGIMCTSMAVVASLMGSVV). The Extracellular segment spans residues 407-411 (QAALS). The helical transmembrane segment at 412–432 (IHGMCGGPMLGLFTLGLVFPF) threads the bilayer. Over 433–437 (VNWKG) the chain is Cytoplasmic. The helical transmembrane segment at 438–458 (ALGGLLTGITLSFWVAIGSFI) threads the bilayer. Topologically, residues 459 to 504 (YPAPESKTLPLPLSTEHCVELNITTTVAPQISSRPVLADTWYSLSY) are extracellular. N480 carries N-linked (GlcNAc...) asparagine glycosylation. A helical transmembrane segment spans residues 505–525 (LYFSAVGCLGCIAAGIIISFL). The Cytoplasmic portion of the chain corresponds to 526–619 (TGKQRGKDID…NSVPEKTTYF (94 aa)).

This sequence belongs to the sodium:solute symporter (SSF) (TC 2.A.21) family. Expressed in the cortical region of the kidney corresponding to the proximal tubule. Expressed in Mueller cells of the inner retina (at protein level). Isoform 1 is expressed in the retina, kidney, small intestine and skeletal muscle. Isoform 2 is not detected in the kidney, small intestine and skeletal muscle. In the kidney, expressed predominantly in tubular epithelial cells of the cortical region and in the convoluted portions of the proximal tubule (pars convoluta). In the small intestine, its expression is highest in the proximal part and gradually decreased towards the distal end. Expressed in the neural retina. Not detected in the caecum and colon.

The protein resides in the apical cell membrane. It catalyses the reaction (S)-lactate(out) + Na(+)(out) = (S)-lactate(in) + Na(+)(in). The enzyme catalyses nicotinate(out) + Na(+)(out) = nicotinate(in) + Na(+)(in). The catalysed reaction is pyruvate(out) + Na(+)(out) = pyruvate(in) + Na(+)(in). It carries out the reaction propanoate(out) + Na(+)(out) = propanoate(in) + Na(+)(in). It catalyses the reaction butanoate(out) + Na(+)(out) = butanoate(in) + Na(+)(in). The enzyme catalyses acetoacetate(out) + Na(+)(out) = acetoacetate(in) + Na(+)(in). Acts as an electroneutral and low-affinity sodium (Na(+))-dependent sodium-coupled solute transporter. Catalyzes the transport across the plasma membrane of many monocarboxylates such as lactate, pyruvate, nicotinate, propionate, butyrate and beta-D-hydroxybutyrate. May be responsible for the first step of reabsorption of monocarboxylates from the lumen of the proximal tubule of the kidney and the small intestine. May play also a role in monocarboxylates transport in the retina. Mediates electroneutral uptake of lactate, with a stoichiometry of 2 Na(+) for each lactate. This chain is Sodium-coupled monocarboxylate transporter 2 (Slc5a12), found in Mus musculus (Mouse).